Consider the following 477-residue polypeptide: PTS system glucose-specific EIICB component (477 aa).

The Cytoplasmic portion of the chain corresponds to Met-1–Lys-14. The region spanning Met-1 to Asp-388 is the PTS EIIC type-1 domain. The chain crosses the membrane as a helical span at residues Ser-15–Ala-35. The Periplasmic segment spans residues Asn-36–Glu-50. A helical transmembrane segment spans residues Ala-51–Phe-71. The Cytoplasmic segment spans residues Thr-72–Ala-79. A helical transmembrane segment spans residues Leu-80–Val-100. At Leu-101–Lys-111 the chain is on the periplasmic side. Residues His-112–Phe-132 traverse the membrane as a helical segment. Residues Asn-133–Arg-151 are Cytoplasmic-facing. The helical transmembrane segment at Phe-152 to Trp-172 threads the bilayer. At Pro-173–Asn-190 the chain is on the periplasmic side. A helical membrane pass occupies residues Pro-191–His-211. Over His-212–Gly-248 the chain is Cytoplasmic. Residues Met-249–Trp-269 form a helical membrane-spanning segment. The Periplasmic segment spans residues His-270–Lys-279. Residues Val-280 to Ile-300 form a helical membrane-spanning segment. Residues Glu-301–Pro-309 are Cytoplasmic-facing. The helical transmembrane segment at Ile-310–Gly-330 threads the bilayer. Residues Met-331–Trp-355 lie on the Periplasmic side of the membrane. Residues Leu-356–Ile-376 form a helical membrane-spanning segment. Residues Lys-377–Ser-477 lie on the Cytoplasmic side of the membrane. A PTS EIIB type-1 domain is found at Ser-399–Ser-477. Cys-421 serves as the catalytic Phosphocysteine intermediate; for EIIB activity. Cys-421 bears the Phosphocysteine mark.

The protein resides in the cell inner membrane. The catalysed reaction is N(pros)-phospho-L-histidyl-[protein] + D-glucose(out) = D-glucose 6-phosphate(in) + L-histidyl-[protein]. The phosphoenolpyruvate-dependent sugar phosphotransferase system (sugar PTS), a major carbohydrate active transport system, catalyzes the phosphorylation of incoming sugar substrates concomitantly with their translocation across the cell membrane. The enzyme II complex composed of PtsG and Crr is involved in glucose transport. Also functions as a chemoreceptor monitoring the environment for changes in sugar concentration. It can also phosphorylate mannose, methyl alpha-glucoside and 2-deoxy-glucose. This Salmonella typhimurium (strain LT2 / SGSC1412 / ATCC 700720) protein is PTS system glucose-specific EIICB component (ptsG).